A 285-amino-acid chain; its full sequence is Inositol monophosphatase 1 (285 aa).

Mg(2+) is bound by residues glutamate 73, aspartate 93, isoleucine 95, and aspartate 96. Glutamate 73 provides a ligand contact to substrate. Substrate is bound by residues 95 to 98 (IDGT), 198 to 200 (GTA), glutamate 217, and aspartate 224. Aspartate 224 is a Mg(2+) binding site.

Belongs to the inositol monophosphatase superfamily. In terms of assembly, homodimer. Requires Mg(2+) as cofactor.

The protein resides in the cytoplasm. The catalysed reaction is a myo-inositol phosphate + H2O = myo-inositol + phosphate. The enzyme catalyses 1D-myo-inositol 1-phosphate + H2O = myo-inositol + phosphate. It carries out the reaction 1D-myo-inositol 2-phosphate + H2O = myo-inositol + phosphate. It catalyses the reaction 1D-myo-inositol 3-phosphate + H2O = myo-inositol + phosphate. The catalysed reaction is 1D-myo-inositol 4-phosphate + H2O = myo-inositol + phosphate. The enzyme catalyses 1D-myo-inositol 5-phosphate + H2O = myo-inositol + phosphate. It carries out the reaction 1D-myo-inositol 6-phosphate + H2O = myo-inositol + phosphate. It catalyses the reaction scyllo-inositol 1-phosphate + H2O = scyllo-inositol + phosphate. The catalysed reaction is alpha-D-galactose 1-phosphate + H2O = D-galactose + phosphate. The enzyme catalyses alpha-D-glucose 1-phosphate + H2O = D-glucose + phosphate. It carries out the reaction D-glucose 6-phosphate + H2O = D-glucose + phosphate. It catalyses the reaction beta-D-fructose 1-phosphate + H2O = D-fructose + phosphate. The catalysed reaction is glycerol 2-phosphate + H2O = glycerol + phosphate. The enzyme catalyses adenosine 2'-phosphate + H2O = adenosine + phosphate. It participates in polyol metabolism; myo-inositol biosynthesis; myo-inositol from D-glucose 6-phosphate: step 2/2. Its activity is regulated as follows. Inhibited by Li(+), Ca(2+) and Mn(2+), but also by Mg(2+) at concentrations above 3 mM. Functionally, phosphatase involved in the dephosphorylation of myo-inositol monophosphate to generate myo-inositol. Is also able to dephosphorylate scyllo-inositol-phosphate, myo-inositol 1,4-diphosphate, scyllo-inositol-1,3-diphosphate and scyllo-inositol-1,4-diphosphate. Also dephosphorylates in vitro other sugar-phosphates including D-galactose-1-phosphate, glucose-1-phosphate, glucose-6-phosphate, fructose-1-phosphate, beta-glycerophosphate and 2'-AMP. Responsible for the provision of inositol required for synthesis of phosphatidylinositol and polyphosphoinositides, and involved in maintaining normal brain function. Has been implicated as the pharmacological target for lithium Li(+) action in brain. The sequence is that of Inositol monophosphatase 1 (impa1) from Xenopus laevis (African clawed frog).